Consider the following 359-residue polypeptide: Fructose-bisphosphate aldolase (359 aa).

Ser50 contributes to the D-glyceraldehyde 3-phosphate binding site. Asp83 acts as the Proton donor in catalysis. His84, Asp105, Glu142, and His198 together coordinate Zn(2+). Gly199 provides a ligand contact to dihydroxyacetone phosphate. His232 is a Zn(2+) binding site. Residues 233–235 and 275–278 each bind dihydroxyacetone phosphate; these read GSS and NIDT.

It belongs to the class II fructose-bisphosphate aldolase family. Homodimer. Zn(2+) serves as cofactor.

The catalysed reaction is beta-D-fructose 1,6-bisphosphate = D-glyceraldehyde 3-phosphate + dihydroxyacetone phosphate. It functions in the pathway carbohydrate biosynthesis; Calvin cycle. It participates in carbohydrate degradation; glycolysis; D-glyceraldehyde 3-phosphate and glycerone phosphate from D-glucose: step 4/4. Functionally, catalyzes the aldol condensation of dihydroxyacetone phosphate (DHAP or glycerone-phosphate) with glyceraldehyde 3-phosphate (G3P) to form fructose 1,6-bisphosphate (FBP) in gluconeogenesis and the reverse reaction in glycolysis. The protein is Fructose-bisphosphate aldolase (cbbA) of Rhizobium meliloti (strain 1021) (Ensifer meliloti).